Here is a 104-residue protein sequence, read N- to C-terminus: Thioredoxin (104 aa).

The 103-residue stretch at 2-104 (AIVKVTDSNF…NLAEVIEKHL (103 aa)) folds into the Thioredoxin domain. Cys29 and Cys32 are joined by a disulfide.

It belongs to the thioredoxin family.

Component of the thioredoxin-thioredoxin reductase system. Participates in various redox reactions through the reversible oxidation of its active center dithiol to a disulfide and catalyzes dithiol-disulfide exchange reactions. The protein is Thioredoxin (trxA) of Staphylococcus saprophyticus subsp. saprophyticus (strain ATCC 15305 / DSM 20229 / NCIMB 8711 / NCTC 7292 / S-41).